The primary structure comprises 78 residues: Acyl carrier protein (78 aa).

The Carrier domain occupies 1–77 (MALIDEIKDV…DAAKYIEEHK (77 aa)). Ser37 is modified (O-(pantetheine 4'-phosphoryl)serine).

Belongs to the acyl carrier protein (ACP) family. Post-translationally, 4'-phosphopantetheine is transferred from CoA to a specific serine of apo-ACP by AcpS. This modification is essential for activity because fatty acids are bound in thioester linkage to the sulfhydryl of the prosthetic group.

The protein resides in the secreted. The protein operates within lipid metabolism; fatty acid biosynthesis. Carrier of the growing fatty acid chain in fatty acid biosynthesis. Has hemolytic activity forming pores approximately 1 nm in diameter into erythrocytes. Is able to induce murine colonic lesions and to disrupt the integrity of epithelial cell monolayers. The protein is Acyl carrier protein (acpP) of Brachyspira hyodysenteriae (Treponema hyodysenteriae).